The following is a 742-amino-acid chain: UPF0313 protein MA_4618 (742 aa).

Residues 1–125 (MGVRKQTMVK…SFSSSLPASK (125 aa)) form a disordered region. The segment at 1 to 128 (MGVRKQTMVK…SSLPASKFLP (128 aa)) is unknown. Basic and acidic residues-rich tracts occupy residues 17-40 (ENKK…ERAG) and 49-73 (KKVE…KAEG). Basic residues predominate over residues 106 to 115 (TGKKEKKQKK). Residues 129 to 742 (MSPEEVKARG…KCLIRRKEKQ (614 aa)) form a UPF0313 region. In terms of domain architecture, Radical SAM core spans 438–707 (ALEMVKFSLT…AMQRALMHYR (270 aa)). The [4Fe-4S] cluster site is built by cysteine 452, cysteine 456, and cysteine 459.

In the C-terminal section; belongs to the UPF0313 family. [4Fe-4S] cluster serves as cofactor.

In Methanosarcina acetivorans (strain ATCC 35395 / DSM 2834 / JCM 12185 / C2A), this protein is UPF0313 protein MA_4618.